A 186-amino-acid chain; its full sequence is Imidazoleglycerol-phosphate dehydratase (186 aa).

This sequence belongs to the imidazoleglycerol-phosphate dehydratase family.

The protein localises to the cytoplasm. It carries out the reaction D-erythro-1-(imidazol-4-yl)glycerol 3-phosphate = 3-(imidazol-4-yl)-2-oxopropyl phosphate + H2O. The protein operates within amino-acid biosynthesis; L-histidine biosynthesis; L-histidine from 5-phospho-alpha-D-ribose 1-diphosphate: step 6/9. This is Imidazoleglycerol-phosphate dehydratase from Dictyoglomus turgidum (strain DSM 6724 / Z-1310).